The primary structure comprises 288 residues: MEGKEEDVRLGANRYTERQPIGTAAQGAEEKDYREPPAAPVFEVEELTSWSFYRAGIAEFVATFLFLYISILTVMGVNKSASKCATVGIQGIAWSFGGMIFALVYCTAGISGGHINPAVTFGLFLARKLSLTRAVFYMAMQCLGAICGAGVVKGFQRGLYMGSGGGANAVNPGYTKGDGLGAEIVGTFVLVYTVFSATDAKRNARDSHVPILAPLPIGFAVFLVHLATIPITGTGINPARSLGAAIVYNRAHAWHDHWIFWVGPFIGAALAAIYHVVVIRAIPFKSRD.

Residues 1 to 30 (MEGKEEDVRLGANRYTERQPIGTAAQGAEE) form a disordered region. 2 helical membrane-spanning segments follow: residues 57–77 (IAEF…VMGV) and 92–114 (IAWS…SGGH). The NPA 1 motif lies at 116 to 118 (NPA). The next 3 membrane-spanning stretches (helical) occupy residues 135–155 (VFYM…VKGF), 177–197 (GDGL…VFSA), and 211–231 (ILAP…TIPI). The NPA 2 signature appears at 237–239 (NPA). Residues 259–279 (IFWVGPFIGAALAAIYHVVVI) form a helical membrane-spanning segment.

The protein belongs to the MIP/aquaporin (TC 1.A.8) family. PIP (TC 1.A.8.11) subfamily. In terms of tissue distribution, expressed in roots and leaves.

It localises to the cell membrane. Functionally, water channel required to facilitate the transport of water across cell membrane. Increases the capacity for root water uptake under water deficit. May play a role in drought avoidance in upland rice. The polypeptide is Aquaporin PIP 1-3 (PIP1-3) (Oryza sativa subsp. japonica (Rice)).